We begin with the raw amino-acid sequence, 283 residues long: ATP phosphoribosyltransferase (283 aa).

This sequence belongs to the ATP phosphoribosyltransferase family. Long subfamily. Requires Mg(2+) as cofactor.

The protein localises to the cytoplasm. The catalysed reaction is 1-(5-phospho-beta-D-ribosyl)-ATP + diphosphate = 5-phospho-alpha-D-ribose 1-diphosphate + ATP. Its pathway is amino-acid biosynthesis; L-histidine biosynthesis; L-histidine from 5-phospho-alpha-D-ribose 1-diphosphate: step 1/9. Feedback inhibited by histidine. In terms of biological role, catalyzes the condensation of ATP and 5-phosphoribose 1-diphosphate to form N'-(5'-phosphoribosyl)-ATP (PR-ATP). Has a crucial role in the pathway because the rate of histidine biosynthesis seems to be controlled primarily by regulation of HisG enzymatic activity. The chain is ATP phosphoribosyltransferase from Bacteroides thetaiotaomicron (strain ATCC 29148 / DSM 2079 / JCM 5827 / CCUG 10774 / NCTC 10582 / VPI-5482 / E50).